A 193-amino-acid chain; its full sequence is Guanylate kinase (193 aa).

The 180-residue stretch at 12 to 191 (DLLTIVAGPT…AANELWLAMN (180 aa)) folds into the Guanylate kinase-like domain. Residue 19 to 26 (GPTAVGKG) participates in ATP binding.

Belongs to the guanylate kinase family.

The protein resides in the cytoplasm. The catalysed reaction is GMP + ATP = GDP + ADP. In terms of biological role, essential for recycling GMP and indirectly, cGMP. This chain is Guanylate kinase, found in Tropheryma whipplei (strain TW08/27) (Whipple's bacillus).